The following is a 411-amino-acid chain: MAKEYFWGATLSKDKKIFKWDPESDFLDDEDDDEEDSISHFLFLKQAVLGVNAKDDDRNVIEVETINFDGETVIQPLLSLRLGLNESTNLDIGLQPPVTFKLALGSGPVYLSGQHALDLQEDEEFGKDFEGAEAYEVGDEDLEDEDEGEEDEEEEETPKKGSPKRIVKKIAAVKGRMKGKGDELDEDEDDDEEEEEEEEEIQTAKGKKRPAPSAKGPAKKLAKVDKDGTSKRKVPNGSVENGHAIDDDEDDEEDEDYKVGDEEEEEEATSGEEEEEDEEEEEEEDDEEMALGDDDDEDDDEEDDEDEEGMDDEDEEEEEDSSPVKPAKKAKGKVNGTAKPKGTPKSQANKGMKEKKTYSLEDMKQDLIKSPSKPKKEEKFKNFVKSKFHLSEGKKIQELWGWYKSTQLTAK.

Composition is skewed to acidic residues over residues 134–156 (AYEVGDEDLEDEDEGEEDEEEEE), 183–201 (ELDEDEDDDEEEEEEEEEI), and 246–321 (DDDE…EEDS). The disordered stretch occupies residues 134–378 (AYEVGDEDLE…KSPSKPKKEE (245 aa)). Positions 351–367 (GMKEKKTYSLEDMKQDL) are enriched in basic and acidic residues.

It belongs to the nucleoplasmin family. Post-translationally, phosphorylated by CaM-kinase II in vitro.

It localises to the nucleus. Functionally, required for mitotic progression. Binds to chromatin. This is Mitotic apparatus protein p62 from Lytechinus pictus (Painted sea urchin).